Consider the following 354-residue polypeptide: Glyceraldehyde-3-phosphate dehydrogenase (354 aa).

NAD(+)-binding positions include 11-12 (TI) and glycine 108. Position 137–139 (137–139 (SCN)) interacts with D-glyceraldehyde 3-phosphate. The active-site Nucleophile is cysteine 138. Arginine 166 is a binding site for NAD(+). Residue 192–193 (HG) participates in D-glyceraldehyde 3-phosphate binding. Glutamine 299 contributes to the NAD(+) binding site.

Belongs to the glyceraldehyde-3-phosphate dehydrogenase family. In terms of assembly, homotetramer.

It localises to the cytoplasm. The catalysed reaction is D-glyceraldehyde 3-phosphate + phosphate + NADP(+) = (2R)-3-phospho-glyceroyl phosphate + NADPH + H(+). It carries out the reaction D-glyceraldehyde 3-phosphate + phosphate + NAD(+) = (2R)-3-phospho-glyceroyl phosphate + NADH + H(+). It participates in carbohydrate degradation; glycolysis; pyruvate from D-glyceraldehyde 3-phosphate: step 1/5. The protein is Glyceraldehyde-3-phosphate dehydrogenase of Haloarcula marismortui (strain ATCC 43049 / DSM 3752 / JCM 8966 / VKM B-1809) (Halobacterium marismortui).